The primary structure comprises 587 residues: Serine/threonine-protein phosphatase 2A 65 kDa regulatory subunit A gamma isoform (587 aa).

S2 bears the N-acetylserine mark. 14 HEAT repeats span residues 2–42, 44–80, 81–119, 158–194, 197–235, 236–274, 276–313, 314–352, 353–391, 393–430, 432–469, 470–508, 509–547, and 549–586; these read SMVD…ALGE, RTRKELIPFLSENNDDDDEVLLAMAEELGGFILYVGG, VEYAYVLLPPLETLSTVEETCVREKAVDSLCRIGAQMRE, DVLKTELRSIYGQLCQDDMPMVRRAAATNLGKFAATI, AHLKTDIMSMFEDLTQDDQDSVRLLAVEGCAALGKLLEP, QDCVAHILPVIVNFSQDKSWRVRYMVANQLYELCEAVGP, PTRTDLVPAYARLLCDNEAEVRIAAAGKVTKFCRILNP, ELAIQHILPCVKELSSDSSQHVRSALASVIMGMAPVLGK, DATIEHLLPIFLSLLKDEFPDVRLNIISKLDQVNQVIGI, LLSQSLLPAIVELAEDRHWRVRLAIIEYIPLLASQLGV, FFDEKLGALCMQWLQDKVHSIREAAANNLKRLAEEFGP, EWAMQHIVPQVLEMINNPHYLYRMTILRAVSLLAPVMGS, EITCSKLLPAVITASKDRVPNIKFNVAKMMQSLIPIVDQ, and VVENMIRPCLVELSEDPDVDVRYFANQALQSIDNVMMS.

This sequence belongs to the phosphatase 2A regulatory subunit A family. As to quaternary structure, PP2A consists of a common heterodimeric core enzyme, composed of a 36 kDa catalytic subunit (subunit C) and a 65 kDa constant regulatory subunit (subunit A), that associates with a variety of regulatory subunits such as subunits B (the R2/B/PR55/B55, R3/B''/PR72/PR130/PR59 and R5/B'/B56 families). Interacts with CHIP. Interacts with SRK2E/OST1. In terms of processing, ubiquitinated. CHIP-mediated ubiquitination enhances phosphatase activity after an abiotic stress such as low temperature or darkness. In terms of tissue distribution, expressed ubiquitously at stable levels. However, higher protein levels in roots and flowers (at protein level).

It is found in the cytoplasm. Its subcellular location is the cytosol. The protein resides in the nucleus. Functionally, the A subunit of protein phosphatase 2A serves as a scaffolding molecule to coordinate the assembly of the catalytic subunit and a variable regulatory B subunit. Involved during developmental process such as seedling and floral developments. Seems to act as a negative regulator of PP2A catalytic activity. The polypeptide is Serine/threonine-protein phosphatase 2A 65 kDa regulatory subunit A gamma isoform (PP2AA3) (Arabidopsis thaliana (Mouse-ear cress)).